The following is a 137-amino-acid chain: Acidic phospholipase A2 Vur-PL3 (137 aa).

An N-terminal signal peptide occupies residues 1-16; it reads MRTLWIVAVCLIGVEG. 7 cysteine pairs are disulfide-bonded: Cys-42–Cys-131, Cys-44–Cys-60, Cys-59–Cys-111, Cys-65–Cys-137, Cys-66–Cys-104, Cys-73–Cys-97, and Cys-91–Cys-102. Ca(2+) contacts are provided by Tyr-43, Gly-45, and Gly-47. The active site involves His-63. Residue Asp-64 coordinates Ca(2+). Asp-105 is an active-site residue.

Requires Ca(2+) as cofactor. Expressed by the venom gland.

Its subcellular location is the secreted. The catalysed reaction is a 1,2-diacyl-sn-glycero-3-phosphocholine + H2O = a 1-acyl-sn-glycero-3-phosphocholine + a fatty acid + H(+). The polypeptide is Acidic phospholipase A2 Vur-PL3 (Vipera renardi (Steppe viper)).